Consider the following 413-residue polypeptide: 2,3-diketo-5-methylthiopentyl-1-phosphate enolase (413 aa).

Lysine 98 acts as the Proton acceptor in catalysis. Residues lysine 147, lysine 173 to glutamate 176, histidine 264, glycine 337, and glycine 359 to glycine 360 contribute to the substrate site. Residues lysine 173, aspartate 175, and glutamate 176 each coordinate Mg(2+). An N6-carboxylysine modification is found at lysine 173.

Belongs to the RuBisCO large chain family. Type IV subfamily. Homodimer. Mg(2+) serves as cofactor.

The catalysed reaction is 5-methylsulfanyl-2,3-dioxopentyl phosphate = 2-hydroxy-5-methylsulfanyl-3-oxopent-1-enyl phosphate. It functions in the pathway amino-acid biosynthesis; L-methionine biosynthesis via salvage pathway; L-methionine from S-methyl-5-thio-alpha-D-ribose 1-phosphate: step 3/6. Catalyzes the enolization of 2,3-diketo-5-methylthiopentyl-1-phosphate (DK-MTP-1-P) into 2-hydroxy-3-keto-5-methylthiopentenyl-1-phosphate (HK-MTPenyl-1-P). This is 2,3-diketo-5-methylthiopentyl-1-phosphate enolase from Geobacillus thermodenitrificans (strain NG80-2).